A 723-amino-acid chain; its full sequence is CSC1-like protein ERD4 (723 aa).

At 1 to 5 (MEFAS) the chain is on the cytoplasmic side. A helical membrane pass occupies residues 6 to 26 (FLVSLGTSAIIFVVLMFLFTW). The Extracellular segment spans residues 27 to 90 (LSRRPGNVPV…TAVYFVFQST (64 aa)). Residues 91 to 111 (VLGIFALSALLLLPTLLPIAA) form a helical membrane-spanning segment. Topologically, residues 112 to 148 (TDNNLETSRSATDTTSNGTFSQLDNLSMANITKSSSR) are cytoplasmic. A helical membrane pass occupies residues 149–169 (LWAFLGAVYWVSVVTYFMLWK). The Extracellular segment spans residues 170-364 (AYKHVAALRA…IKFFSRIVRQ (195 aa)). A helical transmembrane segment spans residues 365–385 (YVIYFLVAITILFYMIPIAFV). At 386 to 416 (SAITTLANLQKALPFLKPIVDIAFIRTILES) the chain is on the cytoplasmic side. The helical transmembrane segment at 417–437 (YLPQIALIVFLAMLPKFLMFL) threads the bilayer. Topologically, residues 438-456 (SKSEGIPSQSHAIRATSGK) are extracellular. Residues 457-477 (YFYFSVLNVFIGVTLAGSLFE) form a helical membrane-spanning segment. Residues 478–508 (NLKALEEKPNSFITLLATSLPKSATFFLTYV) lie on the Cytoplasmic side of the membrane. The chain crosses the membrane as a helical span at residues 509 to 529 (ALKFFVGYGLELSRIIPLIIF). Residues 530–572 (HLKKKYLCKTEAEVKEAWYPGDLSYATRVPSDMLILTITFCYS) lie on the Extracellular side of the membrane. A helical membrane pass occupies residues 573–593 (VIAPLILVFGVIYFGLGWLIL). Over 594 to 614 (RNQALKVYVPSYESYGRMWPH) the chain is Cytoplasmic. Residues 615 to 635 (IHTRILAALFLFQLVMFGYLG) form a helical membrane-spanning segment. Residues 636–637 (VK) are Extracellular-facing. Residues 638–658 (IFVWAILLVPLIFISLIFGYV) traverse the membrane as a helical segment. Residues 659–723 (CRQKFYGGFE…YQDYAAISAA (65 aa)) lie on the Cytoplasmic side of the membrane.

It belongs to the CSC1 (TC 1.A.17) family.

It is found in the plastid. It localises to the chloroplast membrane. Acts as an osmosensitive calcium-permeable cation channel. This is CSC1-like protein ERD4 (ERD4) from Brassica juncea (Indian mustard).